Here is a 600-residue protein sequence, read N- to C-terminus: Elongation factor 4 (600 aa).

One can recognise a tr-type G domain in the interval 5–187 (SRIRNFSIIA…AIVTRLPPPK (183 aa)). Residues 17–22 (DHGKST) and 134–137 (NKID) contribute to the GTP site.

This sequence belongs to the TRAFAC class translation factor GTPase superfamily. Classic translation factor GTPase family. LepA subfamily.

It localises to the cell inner membrane. It carries out the reaction GTP + H2O = GDP + phosphate + H(+). Functionally, required for accurate and efficient protein synthesis under certain stress conditions. May act as a fidelity factor of the translation reaction, by catalyzing a one-codon backward translocation of tRNAs on improperly translocated ribosomes. Back-translocation proceeds from a post-translocation (POST) complex to a pre-translocation (PRE) complex, thus giving elongation factor G a second chance to translocate the tRNAs correctly. Binds to ribosomes in a GTP-dependent manner. In Rhodospirillum centenum (strain ATCC 51521 / SW), this protein is Elongation factor 4.